We begin with the raw amino-acid sequence, 520 residues long: Amphoterin-induced protein 2 (520 aa).

The signal sequence occupies residues 1-37 (MSLRFHTLPTLPRAVKPGCRELLCLLVIAVMVSPSSS). The 30-residue stretch at 38–67 (GLCPTACICATDIVSCTNKNLSKVPGNLFR) folds into the LRRNT domain. The Extracellular segment spans residues 38-398 (GLCPTACICA…SHHAHEAFNT (361 aa)). Cystine bridges form between C40-C46 and C44-C53. N-linked (GlcNAc...) asparagine glycosylation occurs at N57. LRR repeat units follow at residues 68-89 (LIKRLDLSYNRIGLLDADWIPV), 93-114 (KLSTLIVRHNNITSISTGSFST), 117-138 (NLKCLDLSSNRLKSVKSAMFQE), 141-162 (VLEVLLLYNNHISYLDPAAFGG), 165-186 (HLQKLYLSGNFLTKFPMDLYVG), and 192-213 (DLTFLDVSYNQIASIPMHHINL). Residue N103 is glycosylated (N-linked (GlcNAc...) asparagine). Residues 227–283 (NPFVCDCSLYSLLTFWYRRHFNSVTDFKHDYTCRLWLDSRHSHQLLLLQDSFLNCSH) enclose the LRRCT domain. 2 disulfide bridges follow: C231-C259 and C233-C281. N-linked (GlcNAc...) asparagine glycosylation is found at N280, N287, N344, N372, N380, N383, and N387. Residues 288 to 378 (GSFHALGFIH…RLLNETVDIM (91 aa)) form the Ig-like C2-type domain. C309 and C362 are joined by a disulfide. A helical transmembrane segment spans residues 399–419 (AFTTLAACVVSIVLVLLYLYL). Over 420–520 (TPCPCKCRDK…FSDTPFVAST (101 aa)) the chain is Cytoplasmic. Disordered stretches follow at residues 437–458 (QSNAHSSILSPGPTRDASAEDR) and 498–520 (SRAKSDSDSVNSVFSDTPFVAST).

This sequence belongs to the immunoglobulin superfamily. AMIGO family. In terms of assembly, binds itself as well as AMIGO1 and AMIGO3. In terms of tissue distribution, highest levels in the lung. High levels in cerebellar granule neurons and Purkinje cells. Also in pyramidal cells between CA1 and CA3 regions of the hippocampus and granule cells of the dentate gyrus.

The protein resides in the cell membrane. Its subcellular location is the nucleus. Required for depolarization-dependent survival of cultured cerebellar granule neurons. May mediate homophilic as well as heterophilic cell-cell interaction with AMIGO1 or AMIGO3. May contribute to signal transduction through its intracellular domain. The polypeptide is Amphoterin-induced protein 2 (Rattus norvegicus (Rat)).